The following is a 119-amino-acid chain: Ribonuclease P protein component (119 aa).

Belongs to the RnpA family. Consists of a catalytic RNA component (M1 or rnpB) and a protein subunit.

It carries out the reaction Endonucleolytic cleavage of RNA, removing 5'-extranucleotides from tRNA precursor.. Its function is as follows. RNaseP catalyzes the removal of the 5'-leader sequence from pre-tRNA to produce the mature 5'-terminus. It can also cleave other RNA substrates such as 4.5S RNA. The protein component plays an auxiliary but essential role in vivo by binding to the 5'-leader sequence and broadening the substrate specificity of the ribozyme. In Salmonella arizonae (strain ATCC BAA-731 / CDC346-86 / RSK2980), this protein is Ribonuclease P protein component.